A 288-amino-acid chain; its full sequence is MQPTLAPAPHPSMQTSAQDHADQVLHDQLLAAHQHLSHPQQARPPPPPPQPPHMQPTTPVARDQNNIDPAISGGAMLAGPQTPQPDLSGQESPKTYGKRPLSTSKRAAQNRAAQRAFRQRKEAHIRDLEGKVKAYETMGEAIKALQAENYQLREYIINLQSRLLDTQGEVPELPGNIDLSQPRGDIPVPAPPTSGTSTSAVPVPPPTAPQQPQPAQNQASAPNDDMNSLNRIAVAGLGMRKPPTEEANYLGNSFQQQARRVRPDDGQPDASELTLPKQEPTHGLPLIS.

The span at Met1–His10 shows a compositional bias: pro residues. The segment at Met1–Lys121 is disordered. Low complexity predominate over residues His26–Gln41. Pro residues predominate over residues Ala42–Met54. The segment covering Gln84 to Pro93 has biased composition (polar residues). In terms of domain architecture, bZIP spans Pro100–Leu163. The basic motif stretch occupies residues Leu101–His124. A compositionally biased stretch (low complexity) spans Arg106–Ala116. The leucine-zipper stretch occupies residues Leu128 to Leu159. 2 disordered regions span residues Glu172 to Met226 and Pro242 to Ser288. The segment covering Pro202 to Pro212 has biased composition (pro residues). The segment covering Gln213–Pro222 has biased composition (low complexity).

Belongs to the bZIP family.

The protein resides in the nucleus. Functionally, putative transcription factor. This Aspergillus clavatus (strain ATCC 1007 / CBS 513.65 / DSM 816 / NCTC 3887 / NRRL 1 / QM 1276 / 107) protein is Putative transcription factor kapC (kapC).